The following is a 338-amino-acid chain: Holliday junction branch migration complex subunit RuvB (338 aa).

The tract at residues 4–187 (ADKDRLVSGD…FGISEHMAYY (184 aa)) is large ATPase domain (RuvB-L). ATP is bound by residues L26, R27, G68, K71, T72, T73, 134 to 136 (EDF), R177, Y187, and R224. T72 provides a ligand contact to Mg(2+). Positions 188-258 (SADDLSEIVK…MVDHALDQLQ (71 aa)) are small ATPAse domain (RuvB-S). Residues 261–338 (QQGLDQIDRK…AHMGMSAEQH (78 aa)) form a head domain (RuvB-H) region. DNA-binding residues include R316 and R321.

The protein belongs to the RuvB family. Homohexamer. Forms an RuvA(8)-RuvB(12)-Holliday junction (HJ) complex. HJ DNA is sandwiched between 2 RuvA tetramers; dsDNA enters through RuvA and exits via RuvB. An RuvB hexamer assembles on each DNA strand where it exits the tetramer. Each RuvB hexamer is contacted by two RuvA subunits (via domain III) on 2 adjacent RuvB subunits; this complex drives branch migration. In the full resolvosome a probable DNA-RuvA(4)-RuvB(12)-RuvC(2) complex forms which resolves the HJ.

The protein localises to the cytoplasm. The enzyme catalyses ATP + H2O = ADP + phosphate + H(+). In terms of biological role, the RuvA-RuvB-RuvC complex processes Holliday junction (HJ) DNA during genetic recombination and DNA repair, while the RuvA-RuvB complex plays an important role in the rescue of blocked DNA replication forks via replication fork reversal (RFR). RuvA specifically binds to HJ cruciform DNA, conferring on it an open structure. The RuvB hexamer acts as an ATP-dependent pump, pulling dsDNA into and through the RuvAB complex. RuvB forms 2 homohexamers on either side of HJ DNA bound by 1 or 2 RuvA tetramers; 4 subunits per hexamer contact DNA at a time. Coordinated motions by a converter formed by DNA-disengaged RuvB subunits stimulates ATP hydrolysis and nucleotide exchange. Immobilization of the converter enables RuvB to convert the ATP-contained energy into a lever motion, pulling 2 nucleotides of DNA out of the RuvA tetramer per ATP hydrolyzed, thus driving DNA branch migration. The RuvB motors rotate together with the DNA substrate, which together with the progressing nucleotide cycle form the mechanistic basis for DNA recombination by continuous HJ branch migration. Branch migration allows RuvC to scan DNA until it finds its consensus sequence, where it cleaves and resolves cruciform DNA. This chain is Holliday junction branch migration complex subunit RuvB, found in Lacticaseibacillus paracasei (strain ATCC 334 / BCRC 17002 / CCUG 31169 / CIP 107868 / KCTC 3260 / NRRL B-441) (Lactobacillus paracasei).